Reading from the N-terminus, the 468-residue chain is Secretogranin-3 (468 aa).

The first 19 residues, 1–19, serve as a signal peptide directing secretion; the sequence is MGFLGTGTWILVLVLPIQA. Residues 23 to 69 are disordered; it reads PGGSQDKSLHNRELSAERPLNEQIAEAEEDKIKKTYPPENKPGQSNY. Positions 29–42 are enriched in basic and acidic residues; sequence KSLHNRELSAERPL. Ser-37 is subject to Phosphoserine. O-linked (Xyl...) (chondroitin sulfate) serine glycosylation is present at Ser-37. Residues Thr-216 and Thr-231 are each glycosylated (O-linked (GalNAc...) threonine). Positions 353–406 are disordered; sequence KLFPAPSEKSHEETDSTKEEAAKMEKEYGSLKDSTKDDNSNPGGKTDEPKGKTE. Ser-359 is a glycosylation site (O-linked (GalNAc...) serine). Residues 360 to 406 are compositionally biased toward basic and acidic residues; the sequence is EKSHEETDSTKEEAAKMEKEYGSLKDSTKDDNSNPGGKTDEPKGKTE. Phosphoserine is present on Ser-362.

As to quaternary structure, interacts with CHGA. Interacts with secretogranin II/SCG2. Interacts (via C-terminus) with CPE. Post-translationally, O-glycosylated. Detected in urine (at protein level). Expressed in brain, heart, kidney, liver and skeletal muscle.

The protein resides in the cytoplasmic vesicle. Its subcellular location is the secretory vesicle. It is found in the secretory vesicle membrane. The protein localises to the secreted. Member of the granin protein family that regulates the biogenesis of secretory granules. Acts as a sorting receptor for intragranular proteins including chromogranin A/CHGA. May also play a role in angiogenesis. Promotes endothelial proliferation, migration and tube formation through MEK/ERK signaling pathway. The polypeptide is Secretogranin-3 (SCG3) (Homo sapiens (Human)).